The primary structure comprises 397 residues: Protein PEP-RELATED DEVELOPMENT ARRESTED 1, chloroplastic (397 aa).

The N-terminal 52 residues, 1–52 (MLQSIHLRFSSTPSPSKRESLIIPSVICSFPFTSSSFRPKQTQKLKRLVQFC), are a transit peptide targeting the chloroplast. Residues 315 to 334 (KDEGADNLSKEDDSSTEGRK) are compositionally biased toward basic and acidic residues. Residues 315–351 (KDEGADNLSKEDDSSTEGRKPSGLNGRGSVTGRKPLP) are disordered.

In terms of assembly, interacts with FSD2 and MRL7. Highly expressed in young leaves, shoots and flowers. Expressed at low levels in stems and siliques.

Its subcellular location is the plastid. The protein resides in the chloroplast stroma. It localises to the chloroplast nucleoid. Its function is as follows. Plays an essential role in early steps of chloroplast development. May be involved in the redox control of plastid gene expression by maintening the redox state around chloroplast nucleoids. May positively regulate plastid-encoded RNA polymerase (PEP) activity, through binding to FSD2. The protein is Protein PEP-RELATED DEVELOPMENT ARRESTED 1, chloroplastic (PRDA1) of Arabidopsis thaliana (Mouse-ear cress).